A 677-amino-acid chain; its full sequence is MSISWTRNFFERFCVEEYNIDTIKQSSFLSADLLPSLGARINQSTKLRKHIISPFNPRYRAWEMWLVLLVIYSAWICPFQFAFITYKKDAIFIIDNIVNGFFAIDIILTFFVAYLDSHSYLLVDSPKKIAIRYLSTWFAFDVCSTAPFQPLSLLFNYNGSELGFRILSMLRLWRLRRVSSLFARLEKDIRFNYFWIRCTKLISVTLFAIHCAGCFNYLIADRYPNPRKTWIGAVYPNFKEASLWNRYVTALYWSITTLTTTGYGDFHAENPREMLFDIFFMMFNLGLTAYLIGNMTNLVVHWTSRTRTFRDSVRAASEFASRNQLPHDIQDQMLSHICLKFKTEGLKQQETLNNLPKAIRSSIANYLFFPIVHNIYLFQGVSRNFLFQLVSDIDAEYFPPKEDIILQNEAPTDLYILVSGAVDFTVYVDGHDQFQGKAVIGETFGEVGVLYYRPQPFTVRTTELSQILRISRTSLMSAMHAHADDGRVIMNNLFMKLRGQQSIAIDDSNTSGHENRDFKSMGWEEWRDSRKDGYGLDVTNPTSDTALMDAIHKEDTEMVKKILKEQKIERAKVERSSSETAGRSYANDSSKKDPYCSSSNQIIKPCKREEKRVTIHMMSESKNGKLILLPSSIEELLRLASEKFGGCNFTKITNADNAEIDDLDVIWDGDHLYFSSN.

Residues 1–63 (MSISWTRNFF…PFNPRYRAWE (63 aa)) lie on the Cytoplasmic side of the membrane. A helical transmembrane segment spans residues 64–84 (MWLVLLVIYSAWICPFQFAFI). The Extracellular segment spans residues 85 to 90 (TYKKDA). Residues 91–111 (IFIIDNIVNGFFAIDIILTFF) form a helical membrane-spanning segment. Topologically, residues 112–134 (VAYLDSHSYLLVDSPKKIAIRYL) are cytoplasmic. Residues 135–155 (STWFAFDVCSTAPFQPLSLLF) traverse the membrane as a helical segment. The Extracellular segment spans residues 156–165 (NYNGSELGFR). The chain crosses the membrane as a helical; Voltage-sensor span at residues 166 to 186 (ILSMLRLWRLRRVSSLFARLE). Residues 187–200 (KDIRFNYFWIRCTK) are Cytoplasmic-facing. The chain crosses the membrane as a helical span at residues 201–221 (LISVTLFAIHCAGCFNYLIAD). At 222–248 (RYPNPRKTWIGAVYPNFKEASLWNRYV) the chain is on the extracellular side. An intramembrane region (pore-forming) is located at residues 249–268 (TALYWSITTLTTTGYGDFHA). The Extracellular portion of the chain corresponds to 269-272 (ENPR). Residues 273 to 293 (EMLFDIFFMMFNLGLTAYLIG) traverse the membrane as a helical segment. The Cytoplasmic segment spans residues 294–677 (NMTNLVVHWT…DGDHLYFSSN (384 aa)). 377-496 (LFQGVSRNFL…RVIMNNLFMK (120 aa)) is a binding site for a nucleoside 3',5'-cyclic phosphate. Residues 568 to 577 (IERAKVERSS) are compositionally biased toward basic and acidic residues. Positions 568–601 (IERAKVERSSSETAGRSYANDSSKKDPYCSSSNQ) are disordered. The region spanning 612–677 (RVTIHMMSES…DGDHLYFSSN (66 aa)) is the KHA domain.

Belongs to the potassium channel family. Plant (TC 1.A.1.4) subfamily. In terms of assembly, the potassium channel is probably composed of a homo- or heterotetrameric complex of pore-forming subunits. May interact with AKT2 and KAT2. Interacts with SLAC1 and SLAH3. As to expression, expressed in guard cells, and in roots.

Its subcellular location is the membrane. Its function is as follows. Highly selective inward-rectifying potassium channel. This voltage-gated channel could mediate long-term potassium influx into guard cells leading to stomatal opening. Assuming opened or closed conformations in response to the voltage difference across the membrane, the channel is activated by hyperpolarization. The channel activity is enhanced upon external acidification. Also permeable to ammonium ions. Blocked by tetraethylammonium and barium ions. This chain is Potassium channel KAT1 (KAT1), found in Arabidopsis thaliana (Mouse-ear cress).